We begin with the raw amino-acid sequence, 424 residues long: Glutamyl-tRNA reductase (424 aa).

Residues 49–52 (TCNR), serine 107, 112–114 (EPQ), and glutamine 118 contribute to the substrate site. Cysteine 50 serves as the catalytic Nucleophile. 187–192 (GAGETI) serves as a coordination point for NADP(+).

The protein belongs to the glutamyl-tRNA reductase family. Homodimer.

The enzyme catalyses (S)-4-amino-5-oxopentanoate + tRNA(Glu) + NADP(+) = L-glutamyl-tRNA(Glu) + NADPH + H(+). The protein operates within porphyrin-containing compound metabolism; protoporphyrin-IX biosynthesis; 5-aminolevulinate from L-glutamyl-tRNA(Glu): step 1/2. Catalyzes the NADPH-dependent reduction of glutamyl-tRNA(Glu) to glutamate 1-semialdehyde (GSA). In Pseudomonas fluorescens (strain ATCC BAA-477 / NRRL B-23932 / Pf-5), this protein is Glutamyl-tRNA reductase.